We begin with the raw amino-acid sequence, 114 residues long: Putative antiporter subunit mnhC2 (114 aa).

3 helical membrane passes run 3–23 (LILLLVIGFLVFIGTYMILSI), 25–45 (LIRIVIGISIYTHAGNLIIMS), and 72–92 (AIVLTAIVIGFGMTAFLLVLI).

Belongs to the CPA3 antiporters (TC 2.A.63) subunit C family. In terms of assembly, may form a heterooligomeric complex that consists of seven subunits: mnhA2, mnhB2, mnhC2, mnhD2, mnhE2, mnhF2 and mnhG2.

It localises to the cell membrane. In Staphylococcus epidermidis (strain ATCC 12228 / FDA PCI 1200), this protein is Putative antiporter subunit mnhC2 (mnhC2).